The primary structure comprises 149 residues: Ricin B-like lectin (149 aa).

Ser-2 is modified (N-acetylserine). 4 residues coordinate a carbohydrate: Asp-21, Gly-24, Asn-39, and Asn-47. The involved in dimerization stretch occupies residues 110 to 112; it reads PNL.

As to quaternary structure, homodimer. Post-translationally, the N-terminus is blocked.

In terms of biological role, lectin specific for terminal, non-reducing N-acetylgalactosamine (Gal-NAc)-containing carbohydrates including N,N'-diacetyllactosediamine/LDN (GalNAcbeta1-4GlcNAc, LacdiNAc). Specific also for carbohydrates containing N-acetylglucosamine (-GlcNAc) or N-acetyllactosamine (-Galbeta1-4GlcNAc) at the reducing end. Agglutinates human blood group A, AB, B and O erythrocytes with a strong preference for group A. Agglutinates bovine erythrocytes with a very low specificity. Binds carbohydrates bivalently, which is required for its biological activity. Exhibits insecticidal activity against the fruit fly D.melanogaster, mosquito A.aegypti, and amoebozoa A.castellanii. Has anti-nutritional activity against Colorado potato beetle L.decemlineata, and against worm C.elegans. Has antiproliferative activity against human leukemic T-cells. Has an immunostimulatory effect on human antigen-presenting dendritic cells, which are subsequently able to induce efficient T-cell immune responses. This is Ricin B-like lectin from Clitocybe nebularis (Clouded agaric).